Reading from the N-terminus, the 326-residue chain is 4-hydroxythreonine-4-phosphate dehydrogenase (326 aa).

The substrate site is built by H134 and T135. A divalent metal cation-binding residues include H164, H209, and H264. Residues K272, N281, and R290 each contribute to the substrate site.

The protein belongs to the PdxA family. In terms of assembly, homodimer. It depends on Zn(2+) as a cofactor. Requires Mg(2+) as cofactor. Co(2+) serves as cofactor.

Its subcellular location is the cytoplasm. The enzyme catalyses 4-(phosphooxy)-L-threonine + NAD(+) = 3-amino-2-oxopropyl phosphate + CO2 + NADH. It participates in cofactor biosynthesis; pyridoxine 5'-phosphate biosynthesis; pyridoxine 5'-phosphate from D-erythrose 4-phosphate: step 4/5. Catalyzes the NAD(P)-dependent oxidation of 4-(phosphooxy)-L-threonine (HTP) into 2-amino-3-oxo-4-(phosphooxy)butyric acid which spontaneously decarboxylates to form 3-amino-2-oxopropyl phosphate (AHAP). The chain is 4-hydroxythreonine-4-phosphate dehydrogenase from Colwellia psychrerythraea (strain 34H / ATCC BAA-681) (Vibrio psychroerythus).